The sequence spans 485 residues: Anthranilate synthase component I-like protein (485 aa).

Residues Ser-69 and 271-273 (PFA) contribute to the L-tryptophan site. Residue 306–307 (GT) participates in chorismate binding. Mg(2+) is bound at residue Glu-333. Chorismate is bound by residues Arg-441, 455-457 (GAG), and Gly-457. Mg(2+) is bound at residue Glu-470.

The protein belongs to the anthranilate synthase component I family. Tetramer of two components I and two components II. Mg(2+) serves as cofactor.

It catalyses the reaction chorismate + L-glutamine = anthranilate + pyruvate + L-glutamate + H(+). It functions in the pathway amino-acid biosynthesis; L-tryptophan biosynthesis; L-tryptophan from chorismate: step 1/5. This is Anthranilate synthase component I-like protein (trpE2) from Synechocystis sp. (strain ATCC 27184 / PCC 6803 / Kazusa).